The primary structure comprises 396 residues: Elongation factor Tu (396 aa).

One can recognise a tr-type G domain in the interval 10–206 (KPHVNIGTIG…AVDESVPEPV (197 aa)). The G1 stretch occupies residues 19-26 (GHVDHGKT). A GTP-binding site is contributed by 19-26 (GHVDHGKT). Thr26 provides a ligand contact to Mg(2+). Residues 62–66 (GITIN) form a G2 region. Positions 83 to 86 (DAPG) are G3. GTP is bound by residues 83–87 (DAPGH) and 138–141 (NKSD). The segment at 138–141 (NKSD) is G4. Positions 176–178 (SGL) are G5.

It belongs to the TRAFAC class translation factor GTPase superfamily. Classic translation factor GTPase family. EF-Tu/EF-1A subfamily. As to quaternary structure, monomer.

The protein resides in the cytoplasm. The catalysed reaction is GTP + H2O = GDP + phosphate + H(+). GTP hydrolase that promotes the GTP-dependent binding of aminoacyl-tRNA to the A-site of ribosomes during protein biosynthesis. The sequence is that of Elongation factor Tu from Beutenbergia cavernae (strain ATCC BAA-8 / DSM 12333 / CCUG 43141 / JCM 11478 / NBRC 16432 / NCIMB 13614 / HKI 0122).